The sequence spans 430 residues: Enolase (430 aa).

Q165 contributes to the (2R)-2-phosphoglycerate binding site. Catalysis depends on E207, which acts as the Proton donor. Mg(2+) contacts are provided by D244, E287, and D314. Residues K339, R368, S369, and K390 each contribute to the (2R)-2-phosphoglycerate site. K339 acts as the Proton acceptor in catalysis.

It belongs to the enolase family. As to quaternary structure, component of the RNA degradosome, a multiprotein complex involved in RNA processing and mRNA degradation. Mg(2+) is required as a cofactor.

The protein resides in the cytoplasm. Its subcellular location is the secreted. The protein localises to the cell surface. The catalysed reaction is (2R)-2-phosphoglycerate = phosphoenolpyruvate + H2O. The protein operates within carbohydrate degradation; glycolysis; pyruvate from D-glyceraldehyde 3-phosphate: step 4/5. In terms of biological role, catalyzes the reversible conversion of 2-phosphoglycerate (2-PG) into phosphoenolpyruvate (PEP). It is essential for the degradation of carbohydrates via glycolysis. The protein is Enolase of Stenotrophomonas maltophilia (strain K279a).